Consider the following 241-residue polypeptide: Proteasome subunit beta type-1 (241 aa).

Met1 is modified (N-acetylmethionine). Positions Met1–Leu28 are excised as a propeptide. An O-linked (GlcNAc) serine glycan is attached at Ser58. Phosphoserine is present on residues Ser62 and Ser68. At Tyr150 the chain carries Phosphotyrosine. The residue at position 162 (Ser162) is a Phosphoserine. N6-acetyllysine is present on Lys204. Ser209 carries an O-linked (GlcNAc) serine glycan.

Belongs to the peptidase T1B family. As to quaternary structure, the 26S proteasome consists of a 20S proteasome core and two 19S regulatory subunits. The 20S proteasome core is a barrel-shaped complex made of 28 subunits that are arranged in four stacked rings. The two outer rings are each formed by seven alpha subunits, and the two inner rings are formed by seven beta subunits. The proteolytic activity is exerted by three beta-subunits PSMB5, PSMB6 and PSMB7. Interacts with SERPINB2. Interacts with RFPL4A.

The protein localises to the cytoplasm. Its subcellular location is the nucleus. Its function is as follows. Non-catalytic component of the 20S core proteasome complex involved in the proteolytic degradation of most intracellular proteins. This complex plays numerous essential roles within the cell by associating with different regulatory particles. Associated with two 19S regulatory particles, forms the 26S proteasome and thus participates in the ATP-dependent degradation of ubiquitinated proteins. The 26S proteasome plays a key role in the maintenance of protein homeostasis by removing misfolded or damaged proteins that could impair cellular functions, and by removing proteins whose functions are no longer required. Associated with the PA200 or PA28, the 20S proteasome mediates ubiquitin-independent protein degradation. This type of proteolysis is required in several pathways including spermatogenesis (20S-PA200 complex) or generation of a subset of MHC class I-presented antigenic peptides (20S-PA28 complex). This is Proteasome subunit beta type-1 (PSMB1) from Bos taurus (Bovine).